Reading from the N-terminus, the 244-residue chain is Zinc import ATP-binding protein ZnuC 2 (244 aa).

The ABC transporter domain maps to 3–218 (IGCASLTIQL…PEYLALFGID (216 aa)). ATP is bound at residue 35–42 (GPNGSGKT).

This sequence belongs to the ABC transporter superfamily. Zinc importer (TC 3.A.1.15.5) family. As to quaternary structure, the complex is composed of two ATP-binding proteins (ZnuC), two transmembrane proteins (ZnuB) and a solute-binding protein (ZnuA).

It localises to the cell inner membrane. The catalysed reaction is Zn(2+)(out) + ATP(in) + H2O(in) = Zn(2+)(in) + ADP(in) + phosphate(in) + H(+)(in). Functionally, part of the ABC transporter complex ZnuABC involved in zinc import. Responsible for energy coupling to the transport system. The polypeptide is Zinc import ATP-binding protein ZnuC 2 (Hahella chejuensis (strain KCTC 2396)).